We begin with the raw amino-acid sequence, 217 residues long: MALVQALVPREREPKLSILQMDRGDPQHSSHWCPEREKVKLLTLKPRETSKNILINFYRAFNLDKDVFIHQANHPLTVPSSVVMGDNGHTLAEDDKRPCFRVLPCYLERVSSGISISWISAPLPVGAMKHQLLCDLMDLITLSFWLAGQCMSLKATNMQHCKCSIATSDWAIELDRTDYKTLPSEYSILALLQVFAGKNCMDRVLLHVDVNYLKSLP.

This is an uncharacterized protein from Homo sapiens (Human).